We begin with the raw amino-acid sequence, 263 residues long: Large ribosomal subunit protein uL29m (263 aa).

2 disordered regions span residues 51-92 and 208-263; these read ARVT…EELP and PEID…APRV. A compositionally biased stretch (basic and acidic residues) spans 53 to 66; that stretch reads VTRDNSKQRGESAL. The segment covering 214–223 has biased composition (polar residues); sequence NPENPYTPST. The segment covering 233-245 has biased composition (low complexity); the sequence is GAEASETQSTTTE. A compositionally biased stretch (polar residues) spans 246-257; it reads IDPTTIPSSKSQ.

Belongs to the universal ribosomal protein uL29 family. Component of the mitochondrial large ribosomal subunit (mt-LSU). Mature N.crassa 74S mitochondrial ribosomes consist of a small (37S) and a large (54S) subunit. The 37S small subunit contains a 16S ribosomal RNA (16S mt-rRNA) and 32 different proteins. The 54S large subunit contains a 23S rRNA (23S mt-rRNA) and 42 different proteins.

Its subcellular location is the mitochondrion. Component of the mitochondrial ribosome (mitoribosome), a dedicated translation machinery responsible for the synthesis of mitochondrial genome-encoded proteins, including at least some of the essential transmembrane subunits of the mitochondrial respiratory chain. The mitoribosomes are attached to the mitochondrial inner membrane and translation products are cotranslationally integrated into the membrane. In Neurospora crassa (strain ATCC 24698 / 74-OR23-1A / CBS 708.71 / DSM 1257 / FGSC 987), this protein is Large ribosomal subunit protein uL29m (mrpl4).